Reading from the N-terminus, the 283-residue chain is CASP-like protein 4A3 (283 aa).

The disordered stretch occupies residues 1–86; the sequence is MRSPAKTMPS…VEETPSPIVV (86 aa). Topologically, residues 1 to 135 are cytoplasmic; sequence MRSPAKTMPS…SRREEVVKFS (135 aa). The segment covering 9 to 20 has biased composition (low complexity); sequence PSMSPSSVSTEK. Basic and acidic residues predominate over residues 50 to 79; it reads SLDHSSESEKEDAKSKPESRRNKNPGKVEE. A helical transmembrane segment spans residues 136–156; that stretch reads ALGFRLSEVVLALISFSIMAA. Over 157–174 the chain is Extracellular; sequence DKTKGWSGDSFDRYKEYR. A helical membrane pass occupies residues 175-195; sequence FCLSVNVVAFVYSSFQACDLA. Over 196 to 212 the chain is Cytoplasmic; that stretch reads YHLVKEKHLISHHLRPL. Residues 213–233 traverse the membrane as a helical segment; that stretch reads FEFIIDQVLAYLLMSASTAAV. Residues 234-251 are Extracellular-facing; the sequence is TRVDDWVSNWGKDEFTEM. A helical transmembrane segment spans residues 252–272; that stretch reads ASASIAMSFLAFLAFAFSSLI. Over 273–283 the chain is Cytoplasmic; the sequence is SGYNLFNQGSL.

It belongs to the Casparian strip membrane proteins (CASP) family. As to quaternary structure, homodimer and heterodimers.

The protein resides in the cell membrane. This Arabidopsis thaliana (Mouse-ear cress) protein is CASP-like protein 4A3.